Reading from the N-terminus, the 876-residue chain is MEMKPKYDPREVEAGRYEEWVKNGYFKPSEDKSKETYTIVIPPPNVTGKLHLGHAWDTTLQDIITRMKRMQGYDTLYLPGMDHAGIATQAKVEAKLNEQGITRYDLGREKFLEQAWDWKEEYASFIRAQWAKLGLGLDYSRERFTLDEGLSKAVKKVFVDLYNKGIIYRGERIINWDPKARTALSDIEVIHEDVQGAFYHFKYPYADGEGFIEIATTRPETMLGDTAIVVNPNDERYKDVIGKTVILPIVGRELPILADEYVDIDFGSGAMKVTPAHDPNDFEIGQRHQLENIIVMDENGKMNDKAGKYEGMDRFDCRKQLVKDLKEQDLVIKIEDHVHSVGHSERSGAVVEPYLSTQWFVRMEDLAKRSLDNQKTDDRIDFYPQRFEHTFNQWMENIRDWTISRQLWWGHQIPAWYHKETGEIYVGEEAPTDIENWQQDEDVLDTWFSSALWPFSTLGWPDLESEDFKRYYPTNALVTGYDIIFFWVARMIFQGLEFTDRRPFNDVLLHGLVRAEDGRKMSKSLGNGVDPMDVIDEYGADSLRYFLATGSSPGHDLRYSTEKVESVWNFINKIWNGARFSLMNIGEDFKVEDIDLSGNLSLADKWILTRLNETIATVTDLSDKYEFGEVGRALYNFIWDDFCDWYIEMSKIPMNSNDEEQKQVTRSVLSYTLDNIMRMLHPFMPFVTEKIWQSLPHEGDTIVKASWPEVRESLIFEESKQTMQQLVEIIKSVRQSRVEVNTPLSKEIPILIQAKDKEIETTLSQNKDYLIKFCNPSTLNISTDVEIPEKAMTSVVIAGKVVLPLEGLIDMDKEISRLEKELAKLQSELDRVDKKLSNENFVSKAPEKVINEEKRKKQDYQEKYDGVKARIEQLKA.

The short motif at 44–54 (PNVTGKLHLGH) is the 'HIGH' region element. Residues 520-524 (KMSKS) carry the 'KMSKS' region motif. Position 523 (Lys-523) interacts with ATP. Positions 805–876 (LEGLIDMDKE…VKARIEQLKA (72 aa)) form a coiled coil.

It belongs to the class-I aminoacyl-tRNA synthetase family. ValS type 1 subfamily. As to quaternary structure, monomer.

It is found in the cytoplasm. The enzyme catalyses tRNA(Val) + L-valine + ATP = L-valyl-tRNA(Val) + AMP + diphosphate. Its function is as follows. Catalyzes the attachment of valine to tRNA(Val). As ValRS can inadvertently accommodate and process structurally similar amino acids such as threonine, to avoid such errors, it has a 'posttransfer' editing activity that hydrolyzes mischarged Thr-tRNA(Val) in a tRNA-dependent manner. In Staphylococcus aureus (strain JH1), this protein is Valine--tRNA ligase.